We begin with the raw amino-acid sequence, 160 residues long: MLSPKRTKFRKQHRGRMRGVASKGNTIAFGQFALQAQDCGWVTARQIEASRRAMTRYIKRGGQIWIRIFPDKPVTMRPAETRMGSGKGNPEFWVAVVKPGRILFEMGGEDITEETAKEAMRLAQYKLPVKTKFISIDKNLEVSSQENTKNSKKSQEEVKQ.

The protein belongs to the universal ribosomal protein uL16 family. Part of the 50S ribosomal subunit.

Functionally, binds 23S rRNA and is also seen to make contacts with the A and possibly P site tRNAs. The protein is Large ribosomal subunit protein uL16 of Prochlorococcus marinus (strain MIT 9301).